Reading from the N-terminus, the 562-residue chain is Nucleoprotein (562 aa).

The binding site for the cap structure m7GTP stretch occupies residues 53–238 (MRRVKRDDSD…ITQEESQINI (186 aa)). Residues Asp381 and Glu383 each contribute to the Mn(2+) site. Zn(2+) is bound by residues Glu391, Cys498, His501, and Cys522. Residue Asp526 coordinates Mn(2+).

Belongs to the arenaviridae nucleocapsid protein family. Homomultimerizes to form the nucleocapsid. Binds to viral genomic RNA. Interacts with glycoprotein G2. Interacts with protein Z; this interaction probably directs the encapsidated genome to budding sites. Interacts with protein L; this interaction does not interfere with Z-L interaction. Interacts with host IKBKE (via Protein kinase domain); the interaction inhibits IKBKE kinase activity.

It localises to the virion. It is found in the host cytoplasm. Its function is as follows. Encapsidates the genome, protecting it from nucleases. The encapsidated genomic RNA is termed the nucleocapsid (NC). Serves as template for viral transcription and replication. The increased presence of protein N in host cell does not seem to trigger the switch from transcription to replication as observed in other negative strain RNA viruses. Through the interaction with host IKBKE, strongly inhibits the phosphorylation and nuclear translocation of host IRF3, a protein involved in interferon activation pathway, leading to the inhibition of interferon-beta and IRF3-dependent promoters activation. Also encodes a functional 3'-5' exoribonuclease that degrades preferentially dsRNA substrates and thereby participates in the suppression of interferon induction. The polypeptide is Nucleoprotein (Neotoma (wood rats)).